The primary structure comprises 393 residues: SH3 domain-binding protein 5-like (393 aa).

The segment at 1–58 is disordered; it reads MAELRQVPGGRETPQGELRPEVVEDEVPRSPVAEEPGGGGSSSSEAKLSPREEEELDP. Threonine 13 carries the post-translational modification Phosphothreonine. The span at 18 to 28 shows a compositional bias: basic and acidic residues; the sequence is LRPEVVEDEVP. A phosphoserine mark is found at serine 30 and serine 49. Coiled coils occupy residues 59–140 and 169–272; these read RIQE…YERA and WQEM…EQIH. The segment at 273-332 is disordered; the sequence is ARRRGGLPPHPLGPRRSSPVGAEAGPEDMEDGDSGIEGAEGAGLEEGSSLGPGPAPDTDT. Acidic residues predominate over residues 297 to 306; it reads GPEDMEDGDS. A compositionally biased stretch (low complexity) spans 317–332; the sequence is EEGSSLGPGPAPDTDT. Phosphoserine occurs at positions 343, 350, 358, 362, and 378. The interval 362–393 is disordered; the sequence is SLDGQELGTRSGGRRGSDGGARGGRHQRSVSL. A compositionally biased stretch (basic residues) spans 384 to 393; that stretch reads GGRHQRSVSL.

Belongs to the SH3BP5 family.

Functions as a guanine nucleotide exchange factor (GEF) for RAB11A. This chain is SH3 domain-binding protein 5-like (SH3BP5L), found in Homo sapiens (Human).